The following is a 210-amino-acid chain: 2-dehydro-3-deoxy-phosphogluconate aldolase (210 aa).

E41 functions as the Proton acceptor in the catalytic mechanism. Positions 45, 69, and 129 each coordinate pyruvate. K129 acts as the Schiff-base intermediate with substrate in catalysis.

It belongs to the KHG/KDPG aldolase family. Homotrimer.

It is found in the cytoplasm. It carries out the reaction 2-dehydro-3-deoxy-6-phospho-D-gluconate = D-glyceraldehyde 3-phosphate + pyruvate. It participates in carbohydrate acid metabolism; 2-dehydro-3-deoxy-D-gluconate degradation; D-glyceraldehyde 3-phosphate and pyruvate from 2-dehydro-3-deoxy-D-gluconate: step 2/2. In terms of biological role, catalyzes the reversible, stereospecific retro-aldol cleavage of 2-keto-3-deoxy-6-phosphogluconate (KDPG) to pyruvate and D-glyceraldehyde-3-phosphate. This is 2-dehydro-3-deoxy-phosphogluconate aldolase (eda) from Treponema pallidum (strain Nichols).